Consider the following 362-residue polypeptide: 3-dehydroquinate synthase (362 aa).

NAD(+)-binding positions include 70-75, 104-108, 128-129, lysine 141, and lysine 150; these read DGEQYK, GVIGD, and TT. Zn(2+) contacts are provided by glutamate 183, histidine 246, and histidine 263.

This sequence belongs to the sugar phosphate cyclases superfamily. Dehydroquinate synthase family. The cofactor is NAD(+). It depends on Co(2+) as a cofactor. Requires Zn(2+) as cofactor.

The protein resides in the cytoplasm. The catalysed reaction is 7-phospho-2-dehydro-3-deoxy-D-arabino-heptonate = 3-dehydroquinate + phosphate. It participates in metabolic intermediate biosynthesis; chorismate biosynthesis; chorismate from D-erythrose 4-phosphate and phosphoenolpyruvate: step 2/7. Catalyzes the conversion of 3-deoxy-D-arabino-heptulosonate 7-phosphate (DAHP) to dehydroquinate (DHQ). The protein is 3-dehydroquinate synthase of Pasteurella multocida (strain Pm70).